The following is a 172-amino-acid chain: Orotate phosphoribosyltransferase (172 aa).

5-phospho-alpha-D-ribose 1-diphosphate is bound by residues arginine 88, lysine 89, lysine 92, histidine 94, and 113–121 (EDVTTSGGS). Orotate contacts are provided by threonine 117 and arginine 145.

It belongs to the purine/pyrimidine phosphoribosyltransferase family. PyrE subfamily. As to quaternary structure, homodimer. Mg(2+) serves as cofactor.

It carries out the reaction orotidine 5'-phosphate + diphosphate = orotate + 5-phospho-alpha-D-ribose 1-diphosphate. Its pathway is pyrimidine metabolism; UMP biosynthesis via de novo pathway; UMP from orotate: step 1/2. Catalyzes the transfer of a ribosyl phosphate group from 5-phosphoribose 1-diphosphate to orotate, leading to the formation of orotidine monophosphate (OMP). This Methanospirillum hungatei JF-1 (strain ATCC 27890 / DSM 864 / NBRC 100397 / JF-1) protein is Orotate phosphoribosyltransferase.